A 417-amino-acid polypeptide reads, in one-letter code: Serine hydroxymethyltransferase (417 aa).

Residues L121 and 125-127 (GHL) each bind (6S)-5,6,7,8-tetrahydrofolate. Residue K229 is modified to N6-(pyridoxal phosphate)lysine. (6S)-5,6,7,8-tetrahydrofolate is bound at residue 355 to 357 (SPF).

The protein belongs to the SHMT family. Homodimer. The cofactor is pyridoxal 5'-phosphate.

The protein resides in the cytoplasm. It catalyses the reaction (6R)-5,10-methylene-5,6,7,8-tetrahydrofolate + glycine + H2O = (6S)-5,6,7,8-tetrahydrofolate + L-serine. Its pathway is one-carbon metabolism; tetrahydrofolate interconversion. It functions in the pathway amino-acid biosynthesis; glycine biosynthesis; glycine from L-serine: step 1/1. In terms of biological role, catalyzes the reversible interconversion of serine and glycine with tetrahydrofolate (THF) serving as the one-carbon carrier. This reaction serves as the major source of one-carbon groups required for the biosynthesis of purines, thymidylate, methionine, and other important biomolecules. Also exhibits THF-independent aldolase activity toward beta-hydroxyamino acids, producing glycine and aldehydes, via a retro-aldol mechanism. The protein is Serine hydroxymethyltransferase of Salmonella paratyphi C (strain RKS4594).